The chain runs to 103 residues: Co-chaperonin GroES (103 aa).

It belongs to the GroES chaperonin family. As to quaternary structure, heptamer of 7 subunits arranged in a ring. Interacts with the chaperonin GroEL.

The protein localises to the cytoplasm. Functionally, together with the chaperonin GroEL, plays an essential role in assisting protein folding. The GroEL-GroES system forms a nano-cage that allows encapsulation of the non-native substrate proteins and provides a physical environment optimized to promote and accelerate protein folding. GroES binds to the apical surface of the GroEL ring, thereby capping the opening of the GroEL channel. The polypeptide is Co-chaperonin GroES (Synechococcus sp. (strain CC9311)).